A 293-amino-acid chain; its full sequence is Protease HtpX (293 aa).

2 consecutive transmembrane segments (helical) span residues 4–24 (IALF…VLSL) and 34–54 (GLMI…LLMS). Residue His139 coordinates Zn(2+). Glu140 is an active-site residue. His143 provides a ligand contact to Zn(2+). The next 2 helical transmembrane spans lie at 158-178 (VVNT…AGFM) and 193-213 (LIYF…ASII). Glu222 lines the Zn(2+) pocket.

Belongs to the peptidase M48B family. Requires Zn(2+) as cofactor.

The protein resides in the cell inner membrane. This chain is Protease HtpX, found in Escherichia coli (strain ATCC 8739 / DSM 1576 / NBRC 3972 / NCIMB 8545 / WDCM 00012 / Crooks).